A 361-amino-acid chain; its full sequence is Outer membrane protein P2 (361 aa).

An N-terminal signal peptide occupies residues 1-20 (MKKTLAALIVGAFAASAANA).

Belongs to the Gram-negative porin family. Homotrimer.

Its subcellular location is the cell outer membrane. Forms pores that allow passive diffusion of small molecules across the outer membrane. This chain is Outer membrane protein P2 (ompP2), found in Haemophilus influenzae.